The following is a 224-amino-acid chain: Heme response regulator HssR (224 aa).

The 114-residue stretch at 3-116 (KCLIVDDDYK…ELLFRIQAVL (114 aa)) folds into the Response regulatory domain. D52 bears the 4-aspartylphosphate mark. The segment at residues 124-222 (QDIIKLGNVT…VRGQGYRVIT (99 aa)) is a DNA-binding region (ompR/PhoB-type).

Post-translationally, phosphorylated by HssS.

The protein localises to the cytoplasm. Functionally, member of the two-component regulatory system HssS/HssR involved in intracellular heme homeostasis and tempering of staphylococcal virulence. Phosphorylated HssR binds to a direct repeat sequence within hrtAB promoter and activates the expression of hrtAB, an efflux pump, in response to extracellular heme, hemin, hemoglobin or blood. The protein is Heme response regulator HssR (hssR) of Staphylococcus haemolyticus (strain JCSC1435).